The sequence spans 240 residues: Glutathione S-transferase U9 (240 aa).

Positions 7–86 constitute a GST N-terminal domain; it reads NKVILHGSFA…YIDETWSNGP (80 aa). Glutathione-binding positions include 17–18, 43–44, 57–58, and 70–71; these read SP, NK, KI, and ES. The 135-residue stretch at 92 to 226 folds into the GST C-terminal domain; sequence DPYRRSKVRF…EQILEILRAF (135 aa). Threonine 161 carries the phosphothreonine modification.

This sequence belongs to the GST superfamily. Tau family.

It is found in the cytoplasm. The protein localises to the cytosol. It catalyses the reaction RX + glutathione = an S-substituted glutathione + a halide anion + H(+). May be involved in the conjugation of reduced glutathione to a wide number of exogenous and endogenous hydrophobic electrophiles and have a detoxification role against certain herbicides. This is Glutathione S-transferase U9 (GSTU9) from Arabidopsis thaliana (Mouse-ear cress).